The sequence spans 151 residues: DNA-directed RNA polymerase RPB6 homolog (151 aa).

Positions 20–44 (ETEEENFVDSEEESEDKSEDKDEIV) are enriched in acidic residues. Residues 20 to 46 (ETEEENFVDSEEESEDKSEDKDEIVES) form a disordered region.

This sequence belongs to the archaeal RpoK/eukaryotic RPB6 RNA polymerase subunit family. Part of the viral DNA-directed RNA polymerase that consists of 8 polII-like subunits (RPB1, RPB2, RPB3, RPB5, RPB6, RPB7, RPB9, RPB10), a capping enzyme and a termination factor.

The protein resides in the host cytoplasm. Its subcellular location is the virion. Functionally, component of the DNA-directed RNA polymerase (RNAP) that catalyzes the transcription in the cytoplasm of viral DNA into RNA using the four ribonucleoside triphosphates as substrates. This African swine fever virus (isolate Tick/Malawi/Lil 20-1/1983) (ASFV) protein is DNA-directed RNA polymerase RPB6 homolog.